A 2122-amino-acid chain; its full sequence is Unique GC organizer UGO (2122 aa).

5 helical membrane passes run 19–39, 50–70, 82–102, 115–135, and 145–165; these read FAVA…TNSL, LFGM…FVIV, TYIM…MQLI, VLTF…VLIG, and VVCS…DVGL. 13 disordered regions span residues 337–403, 422–532, 565–591, 627–762, 785–815, 848–870, 903–949, 999–1046, 1068–1308, 1328–1368, 1515–1540, 1560–1608, and 1639–1727; these read AALH…HRSA, FRGL…GPFV, DLRE…SGLQ, HRRG…GRAN, HAAS…CSAS, MSRR…RAER, SKEG…ASAN, RNET…LHSR, PSDL…HEAV, AGLS…SEEE, ANSS…AASA, AAEH…TPHT, and QGLG…TFFG. The span at 363-374 shows a compositional bias: polar residues; sequence RSNTLRGCSGQV. Composition is skewed to basic and acidic residues over residues 503–525, 565–585, and 632–645; these read LRMD…DPAK, DLRE…HAAA, and GARD…RGEP. The segment covering 672–687 has biased composition (basic residues); sequence RLSRSRRHKTRTYRRG. Over residues 690–699 the composition is skewed to low complexity; it reads SDGTTAGTSD. Positions 707–720 are enriched in acidic residues; sequence LEDEGSDSGQESES. Residues 725–735 are compositionally biased toward basic residues; that stretch reads RRRMRSSRNRR. The segment covering 741 to 750 has biased composition (low complexity); that stretch reads EDSSSGTSVR. Residues 751 to 760 are compositionally biased toward basic and acidic residues; it reads SEGRHCREGR. N-linked (GlcNAc...) asparagine glycosylation is present at Asn762. Residues 848–860 are compositionally biased toward basic residues; that stretch reads MSRRRRREGKSRP. Polar residues-rich tracts occupy residues 999-1011 and 1072-1097; these read RNET…SPAT and SLFT…SARI. The N-linked (GlcNAc...) asparagine glycan is linked to Asn1000. Asn1165 carries N-linked (GlcNAc...) asparagine glycosylation. Residues 1220–1261 are compositionally biased toward basic and acidic residues; it reads SREDLVGEADSHVSPEKEVFVSSRREKREEQVPRSRREERRD. Residues 1262–1276 are compositionally biased toward basic residues; the sequence is RRGRRWRRGRRRRKA. 2 stretches are compositionally biased toward basic and acidic residues: residues 1277 to 1289 and 1345 to 1359; these read RECS…RDSS and GDMR…HSDG. Residues 1515–1527 show a composition bias toward polar residues; sequence ANSSTAVSSSLPD. Residue Asn1516 is glycosylated (N-linked (GlcNAc...) asparagine). Low complexity-rich tracts occupy residues 1528–1540 and 1597–1608; these read STAW…AASA and TQTPQTPQTPHT. A compositionally biased stretch (polar residues) spans 1684 to 1693; that stretch reads LSATPSTRLQ. A run of 5 helical transmembrane segments spans residues 1859–1879, 1956–1976, 1989–2009, 2017–2037, and 2040–2060; these read VAWL…LLRL, MLAL…WHLI, IIPA…ILAV, IFLL…PPGV, and VQLF…GQLF. The interval 2102-2122 is disordered; sequence DEGSEDEVSMGSGHLVGDRSA.

Interacts with guanylate cyclase GC; the interaction regulates guanylate cyclase GC trafficking and catalytic activity.

The protein resides in the cell membrane. In terms of biological role, in tachyzoites, required for the cellular trafficking of guanylate cyclase GC to the cell membrane and for GC guanylate cyclase activity. The sequence is that of Unique GC organizer UGO from Toxoplasma gondii (strain ATCC 50853 / GT1).